A 440-amino-acid chain; its full sequence is Metacaspase-1 (440 aa).

A disordered region spans residues 1 to 134 (MFPGSGRKTY…NPQGFGQNSG (134 aa)). A compositionally biased stretch (pro residues) spans 14–51 (APPPGPPNGYQYGPPPGAQGQYPPPQGYPPQGYPPQGY). A compositionally biased stretch (low complexity) spans 52–81 (PPQGYAPQGYPPQGYAPQGYAPQGYQQQGG). The span at 82-94 (QQQGGQQQGGQQQ) shows a compositional bias: gly residues. Residues 98–110 (RQTYATQEAQNFG) are compositionally biased toward polar residues. Active-site residues include histidine 230 and cysteine 286.

The protein belongs to the peptidase C14B family.

Functionally, involved in cell death (apoptosis). The protein is Metacaspase-1 (MCA1) of Debaryomyces hansenii (strain ATCC 36239 / CBS 767 / BCRC 21394 / JCM 1990 / NBRC 0083 / IGC 2968) (Yeast).